A 630-amino-acid chain; its full sequence is Chaperone protein HtpG (630 aa).

The segment at 1–339 (MKGQETRGFQ…SNDLPLNVSR (339 aa)) is a; substrate-binding. The interval 340–555 (EILQDNSITR…VDEMSTQMAK (216 aa)) is b. Positions 556-630 (LFAAAGQQVP…MNQLLLSEKA (75 aa)) are c.

This sequence belongs to the heat shock protein 90 family. As to quaternary structure, homodimer.

The protein resides in the cytoplasm. In terms of biological role, molecular chaperone. Has ATPase activity. The protein is Chaperone protein HtpG of Photorhabdus laumondii subsp. laumondii (strain DSM 15139 / CIP 105565 / TT01) (Photorhabdus luminescens subsp. laumondii).